The following is an 856-amino-acid chain: Genome polyprotein (856 aa).

Residues 141 to 284 (KLTESQMNHL…QGVLNSMVQF (144 aa)) enclose the Peptidase S30 domain. Residues histidine 192, aspartate 201, and serine 235 each act as for P1 proteinase activity in the active site. The short motif at 592–594 (PTK) is the Involved in virions binding and aphid transmission element. The Peptidase C6 domain occupies 618–740 (LYIAKQGYCY…ESEIKHYRVG (123 aa)). Catalysis depends on for helper component proteinase activity residues cysteine 626 and histidine 699.

Belongs to the potyviridae genome polyprotein family. Post-translationally, genome polyprotein of potyviruses undergoes post-translational proteolytic processing by the main proteinase NIa-pro resulting in the production of at least ten individual proteins. The P1 proteinase and the HC-pro cleave only their respective C-termini autocatalytically. 6K1 is essential for proper proteolytic separation of P3 from CI.

It catalyses the reaction Hydrolyzes a Gly-|-Gly bond at its own C-terminus, commonly in the sequence -Tyr-Xaa-Val-Gly-|-Gly, in the processing of the potyviral polyprotein.. In terms of biological role, required for aphid transmission and also has proteolytic activity. Only cleaves a Gly-Gly dipeptide at its own C-terminus. Interacts with virions and aphid stylets. Acts as a suppressor of RNA-mediated gene silencing, also known as post-transcriptional gene silencing (PTGS), a mechanism of plant viral defense that limits the accumulation of viral RNAs. May have RNA-binding activity. The chain is Genome polyprotein from Potato virus Y (strain C) (PVY).